Reading from the N-terminus, the 182-residue chain is UPF0301 protein NGK_1355 (182 aa).

It belongs to the UPF0301 (AlgH) family.

The sequence is that of UPF0301 protein NGK_1355 from Neisseria gonorrhoeae (strain NCCP11945).